A 132-amino-acid chain; its full sequence is Fluoride-specific ion channel FluC 1 (132 aa).

A run of 4 helical transmembrane segments spans residues Leu-9–Leu-29, Ala-35–Phe-55, Leu-72–Val-89, and Trp-100–Leu-120. The Na(+) site is built by Gly-79 and Thr-82.

The protein belongs to the fluoride channel Fluc/FEX (TC 1.A.43) family.

The protein localises to the cell membrane. It carries out the reaction fluoride(in) = fluoride(out). Na(+) is not transported, but it plays an essential structural role and its presence is essential for fluoride channel function. In terms of biological role, fluoride-specific ion channel. Important for reducing fluoride concentration in the cell, thus reducing its toxicity. The chain is Fluoride-specific ion channel FluC 1 from Mycolicibacterium paratuberculosis (strain ATCC BAA-968 / K-10) (Mycobacterium paratuberculosis).